Reading from the N-terminus, the 232-residue chain is Ubiquinone biosynthesis O-methyltransferase (232 aa).

Arginine 36, glycine 55, aspartate 76, and methionine 120 together coordinate S-adenosyl-L-methionine.

The protein belongs to the methyltransferase superfamily. UbiG/COQ3 family.

The catalysed reaction is a 3-demethylubiquinol + S-adenosyl-L-methionine = a ubiquinol + S-adenosyl-L-homocysteine + H(+). The enzyme catalyses a 3-(all-trans-polyprenyl)benzene-1,2-diol + S-adenosyl-L-methionine = a 2-methoxy-6-(all-trans-polyprenyl)phenol + S-adenosyl-L-homocysteine + H(+). It functions in the pathway cofactor biosynthesis; ubiquinone biosynthesis. Its function is as follows. O-methyltransferase that catalyzes the 2 O-methylation steps in the ubiquinone biosynthetic pathway. The chain is Ubiquinone biosynthesis O-methyltransferase from Burkholderia orbicola (strain MC0-3).